We begin with the raw amino-acid sequence, 362 residues long: Methionine import ATP-binding protein MetN (362 aa).

Residues 2–241 (IHIENLSKTY…PRHEVTRAMV (240 aa)) enclose the ABC transporter domain. Residue 38 to 45 (GPSGAGKS) participates in ATP binding.

It belongs to the ABC transporter superfamily. Methionine importer (TC 3.A.1.24) family. As to quaternary structure, the complex is composed of two ATP-binding proteins (MetN), two transmembrane proteins (MetI) and a solute-binding protein (MetQ).

It localises to the cell inner membrane. The catalysed reaction is L-methionine(out) + ATP + H2O = L-methionine(in) + ADP + phosphate + H(+). It catalyses the reaction D-methionine(out) + ATP + H2O = D-methionine(in) + ADP + phosphate + H(+). Its function is as follows. Part of the ABC transporter complex MetNIQ involved in methionine import. Responsible for energy coupling to the transport system. This chain is Methionine import ATP-binding protein MetN, found in Bordetella bronchiseptica (strain ATCC BAA-588 / NCTC 13252 / RB50) (Alcaligenes bronchisepticus).